The chain runs to 165 residues: Lipoprotein signal peptidase (165 aa).

3 helical membrane-spanning segments follow: residues 9-29 (SFLWLSAVTFLLDLSSKYFVV), 65-85 (WQKYFFIVLAIAISLMLCYFL), and 100-120 (ALIIGGALGNMIDRLYHGFVV). Residues D121 and D139 contribute to the active site. A helical transmembrane segment spans residues 134-154 (VFNVADIAISLGAGLMILDAF).

It belongs to the peptidase A8 family.

It localises to the cell inner membrane. The enzyme catalyses Release of signal peptides from bacterial membrane prolipoproteins. Hydrolyzes -Xaa-Yaa-Zaa-|-(S,diacylglyceryl)Cys-, in which Xaa is hydrophobic (preferably Leu), and Yaa (Ala or Ser) and Zaa (Gly or Ala) have small, neutral side chains.. It functions in the pathway protein modification; lipoprotein biosynthesis (signal peptide cleavage). This protein specifically catalyzes the removal of signal peptides from prolipoproteins. The protein is Lipoprotein signal peptidase of Pasteurella multocida (strain Pm70).